A 435-amino-acid chain; its full sequence is 3-ketoacyl-CoA thiolase (435 aa).

Cys98 acts as the Acyl-thioester intermediate in catalysis. Catalysis depends on proton acceptor residues His391 and Cys421.

Belongs to the thiolase-like superfamily. Thiolase family. As to quaternary structure, heterotetramer of two alpha chains (FadJ) and two beta chains (FadI).

The protein localises to the cytoplasm. The enzyme catalyses an acyl-CoA + acetyl-CoA = a 3-oxoacyl-CoA + CoA. It participates in lipid metabolism; fatty acid beta-oxidation. Functionally, catalyzes the final step of fatty acid oxidation in which acetyl-CoA is released and the CoA ester of a fatty acid two carbons shorter is formed. This Colwellia psychrerythraea (strain 34H / ATCC BAA-681) (Vibrio psychroerythus) protein is 3-ketoacyl-CoA thiolase.